We begin with the raw amino-acid sequence, 499 residues long: Protein-tyrosine sulfotransferase (499 aa).

The Cytoplasmic portion of the chain corresponds to M1–K9. The chain crosses the membrane as a helical; Signal-anchor for type II membrane protein span at residues V10 to E30. Topologically, residues L31–T499 are lumenal. R80–T84 lines the 3'-phosphoadenylyl sulfate pocket. C98 and C158 are joined by a disulfide. Catalysis depends on E101, which acts as the Proton donor/acceptor. The segment at R103–R107 is interaction with peptide substrate. R185, S193, and R197 together coordinate 3'-phosphoadenylyl sulfate. C227 and C235 are joined by a disulfide. 3'-phosphoadenylyl sulfate is bound by residues Y240, S287–N296, and K302. 2 N-linked (GlcNAc...) asparagine glycosylation sites follow: N346 and N380. Disordered regions lie at residues K362–K460 and N476–T499. Low complexity-rich tracts occupy residues T375–E400 and H408–Q434. A compositionally biased stretch (basic and acidic residues) spans E443–K460. The segment covering N476–I491 has biased composition (low complexity).

Belongs to the protein sulfotransferase family.

It localises to the golgi apparatus membrane. It carries out the reaction L-tyrosyl-[protein] + 3'-phosphoadenylyl sulfate = O-sulfo-L-tyrosine-[protein] + adenosine 3',5'-bisphosphate + H(+). Functionally, catalyzes the O-sulfation of tyrosine residues within acidic motifs of polypeptides. Has a role in protein secretion. The protein is Protein-tyrosine sulfotransferase of Drosophila melanogaster (Fruit fly).